We begin with the raw amino-acid sequence, 222 residues long: Latexin (222 aa).

One can recognise a Cystatin LXN-type 1 domain in the interval methionine 1–lysine 97. Position 55 is an N6-acetyllysine (lysine 55). The interval asparagine 98 to leucine 117 is alpha-helical linker. Positions glutamate 118–glutamate 222 constitute a Cystatin LXN-type 2 domain.

The protein belongs to the protease inhibitor I47 (latexin) family. In terms of tissue distribution, highly enriched in macrophages.

It localises to the cytoplasm. In terms of biological role, hardly reversible, non-competitive, and potent inhibitor of CPA1, CPA2 and CPA4. May play a role in inflammation. The chain is Latexin (Lxn) from Mus musculus (Mouse).